We begin with the raw amino-acid sequence, 81 residues long: Alpha-toxin Ac1 (81 aa).

The signal sequence occupies residues 1–17; sequence YIVMISLALVVMIGVES. An LCN-type CS-alpha/beta domain is found at 19 to 80; sequence RDGYIVYPNN…PIKDPSQKCT (62 aa). 4 disulfides stabilise this stretch: C29-C79, C33-C51, C37-C61, and C41-C63.

This sequence belongs to the long (4 C-C) scorpion toxin superfamily. Sodium channel inhibitor family. Alpha subfamily. As to expression, expressed by the venom gland.

The protein resides in the secreted. Functionally, alpha toxins bind voltage-independently at site-3 of sodium channels (Nav) and inhibit the inactivation of the activated channels, thereby blocking neuronal transmission. This chain is Alpha-toxin Ac1, found in Androctonus crassicauda (Arabian fat-tailed scorpion).